The primary structure comprises 281 residues: Putative outer membrane protein BBA52 (281 aa).

Residues 162 to 281 (KRISDNQSKL…FFDSLEDQFI (120 aa)) form a disordered region. Positions 179 to 196 (NKSVGSKFSKNSRPSKSP) are enriched in polar residues. Over residues 219–249 (EFLDDPSQESDELEREYQDDELESEDPDDGE) the composition is skewed to acidic residues. Basic and acidic residues predominate over residues 250–262 (REYQDDRESRDDT). Residues 263 to 281 (FNEDQSEDEFFDSLEDQFI) show a composition bias toward acidic residues.

Its subcellular location is the cell outer membrane. The polypeptide is Putative outer membrane protein BBA52 (Borreliella burgdorferi (strain ATCC 35210 / DSM 4680 / CIP 102532 / B31) (Borrelia burgdorferi)).